The sequence spans 324 residues: [Acyl-carrier-protein] phosphodiesterase PptH (324 aa).

Residues Asp22, His24, and Asp51 each contribute to the Mn(2+) site. Fe cation contacts are provided by Asp51, Asn79, His205, and His246. His248 is a Mn(2+) binding site.

It belongs to the metallophosphoesterase superfamily. Fe(3+) serves as cofactor. Requires Mn(2+) as cofactor.

It carries out the reaction holo-[ACP] + H2O = apo-[ACP] + (R)-4'-phosphopantetheine + H(+). Catalyzes the hydrolysis of the phosphopantetheine group from substrate holo-carrier proteins. This Mycobacterium tuberculosis (strain ATCC 25618 / H37Rv) protein is [Acyl-carrier-protein] phosphodiesterase PptH.